We begin with the raw amino-acid sequence, 247 residues long: MAQQTSGRQPRYKRILLKLSGEALMGSEDFGIDPKVLDRMALEVGQLVGIGVQVGLVIGGGNLFRGAALSAAGMDRVTGDHMGMLATVMNALAMRDALERSNIPAIVMSAISMVGVTDHYDRRKAMRHLKTGEVVIFAAGTGNPFFTTDSAACLRAIEIDADVVLKATKVDGVYTADPFKDPHAEKFERLTYDEVLDRKLGVMDLTAICLCRDHNMPLRVFNMNKPGALLNVVVGGAEGTLIEEDAQ.

18 to 21 (KLSG) contacts ATP. G60 lines the UMP pocket. Residues G61 and R65 each contribute to the ATP site. Residues D80 and 141–148 (TGNPFFTT) contribute to the UMP site. T168, Y174, and D177 together coordinate ATP.

The protein belongs to the UMP kinase family. Homohexamer.

It is found in the cytoplasm. The enzyme catalyses UMP + ATP = UDP + ADP. It participates in pyrimidine metabolism; CTP biosynthesis via de novo pathway; UDP from UMP (UMPK route): step 1/1. With respect to regulation, inhibited by UTP. Its function is as follows. Catalyzes the reversible phosphorylation of UMP to UDP. The protein is Uridylate kinase of Ectopseudomonas mendocina (strain ymp) (Pseudomonas mendocina).